Here is a 360-residue protein sequence, read N- to C-terminus: CFA/I fimbrial subunit E (360 aa).

The protein resides in the fimbrium. The chain is CFA/I fimbrial subunit E (cfaE) from Escherichia coli.